Consider the following 256-residue polypeptide: tRNA (guanine-N(7)-)-methyltransferase (256 aa).

The span at 1 to 11 (MHPQDASTEQT) shows a compositional bias: polar residues. The interval 1-35 (MHPQDASTEQTPVDDDQVESSQPVHAPEDVAHPRR) is disordered. Glutamate 85, glutamate 110, aspartate 137, and aspartate 160 together coordinate S-adenosyl-L-methionine. Residue aspartate 160 is part of the active site. Residue lysine 164 coordinates substrate. The segment at 166 to 171 (RHNKRR) is interaction with RNA. Residues aspartate 196 and 234-237 (TKFE) each bind substrate.

This sequence belongs to the class I-like SAM-binding methyltransferase superfamily. TrmB family.

It carries out the reaction guanosine(46) in tRNA + S-adenosyl-L-methionine = N(7)-methylguanosine(46) in tRNA + S-adenosyl-L-homocysteine. It functions in the pathway tRNA modification; N(7)-methylguanine-tRNA biosynthesis. Its function is as follows. Catalyzes the formation of N(7)-methylguanine at position 46 (m7G46) in tRNA. The sequence is that of tRNA (guanine-N(7)-)-methyltransferase from Cupriavidus pinatubonensis (strain JMP 134 / LMG 1197) (Cupriavidus necator (strain JMP 134)).